Consider the following 114-residue polypeptide: Photosystem II reaction center Psb28 protein (114 aa).

The protein belongs to the Psb28 family. In terms of assembly, part of the photosystem II complex.

The protein localises to the cellular thylakoid membrane. The sequence is that of Photosystem II reaction center Psb28 protein from Rippkaea orientalis (strain PCC 8801 / RF-1) (Cyanothece sp. (strain PCC 8801)).